Reading from the N-terminus, the 279-residue chain is Calcium-binding protein 4 (279 aa).

Positions 1 to 12 (MAEEQGRGRHGP) are enriched in basic and acidic residues. Residues 1–114 (MAEEQGRGRH…PGPQHDAAQR (114 aa)) are disordered. Position 42 is a phosphoserine (serine 42). The segment covering 55–65 (GPSSSGEQTPM) has biased composition (polar residues). 4 EF-hand domains span residues 133 to 168 (EELDELQAAFEEFDTDHDGYIGYRDLGECMRTLGYM), 187 to 204 (GRVDFEEFVEMMGPKLRE), 210 to 245 (LGLRELRIAFREFDRDRDGRITVAELREAAPALLGE), and 247 to 279 (LVGPELEEMLQEVDLNGDGTVDFNEFVMMLSRH). Ca(2+) contacts are provided by aspartate 146, aspartate 148, aspartate 150, tyrosine 152, and aspartate 157. 10 residues coordinate Ca(2+): aspartate 223, aspartate 225, aspartate 227, arginine 229, glutamate 234, aspartate 260, asparagine 262, aspartate 264, threonine 266, and glutamate 271.

In terms of assembly, interacts with CACNA1F and CACNA1D (via IQ domain) in a calcium independent manner. Interacts (via N-terminus) with UNC119. Phosphorylated. Phosphorylation levels change with the light conditions and regulate the activity. Expressed in the retina.

It localises to the cytoplasm. Its subcellular location is the presynapse. Its function is as follows. May play a role in normal synaptic function, probably through regulation of Ca(2+) influx and neurotransmitter release in photoreceptor synaptic terminals and in auditory transmission. Modulator of CACNA1F, shifting the activation range to more hyperpolarized voltages. The polypeptide is Calcium-binding protein 4 (CABP4) (Bos taurus (Bovine)).